A 312-amino-acid polypeptide reads, in one-letter code: tRNA-cytidine(32) 2-sulfurtransferase (312 aa).

A PP-loop motif motif is present at residues 47–52 (SGGKDS). [4Fe-4S] cluster is bound by residues C122, C125, and C213.

Belongs to the TtcA family. In terms of assembly, homodimer. The cofactor is Mg(2+). It depends on [4Fe-4S] cluster as a cofactor.

It localises to the cytoplasm. The enzyme catalyses cytidine(32) in tRNA + S-sulfanyl-L-cysteinyl-[cysteine desulfurase] + AH2 + ATP = 2-thiocytidine(32) in tRNA + L-cysteinyl-[cysteine desulfurase] + A + AMP + diphosphate + H(+). It participates in tRNA modification. Its function is as follows. Catalyzes the ATP-dependent 2-thiolation of cytidine in position 32 of tRNA, to form 2-thiocytidine (s(2)C32). The sulfur atoms are provided by the cysteine/cysteine desulfurase (IscS) system. This chain is tRNA-cytidine(32) 2-sulfurtransferase, found in Shewanella frigidimarina (strain NCIMB 400).